Reading from the N-terminus, the 348-residue chain is MARVSENLSEKMKALEVALSSIEKRFGKGAVMPLKAVETVEVETIPTGSISLDIATGVGGIPKGRITEIFGVESSGKTTLALHVIAEAQKRGGVAVFIDAEHALDPKYAKKLGVDVDNLYISQPDYGEQALEIAESLINSGAVDVIVVDSVAALVPKDELEGEMGEAQVGKQARLMSQALRKLKGAVHRSNTALIFINQIREKIGVMFGNPETTPGGRALKFFSDMRLEVRRLGDVKEGGEKKGYRVKVRVVKNKLAPPFQEAEFDVIYGEGICRICDIIDTAANLGVITKSGSWYSYGEKRLGQGREQAKKYLLEHPEMLEEIERKVREVSGLVRPDTENSVGEKSE.

ATP is bound at residue 71–78 (GVESSGKT).

The protein belongs to the RecA family.

The protein localises to the cytoplasm. Functionally, can catalyze the hydrolysis of ATP in the presence of single-stranded DNA, the ATP-dependent uptake of single-stranded DNA by duplex DNA, and the ATP-dependent hybridization of homologous single-stranded DNAs. It interacts with LexA causing its activation and leading to its autocatalytic cleavage. This chain is Protein RecA, found in Aquifex pyrophilus.